The following is a 57-amino-acid chain: UPF0391 membrane protein RHECIAT_CH0003936 (57 aa).

2 helical membrane-spanning segments follow: residues 4–24 and 33–53; these read WALIFFVISIIAGFFGFSGVS and VLFGIALVIFLIFLVLALMAG.

Belongs to the UPF0391 family.

Its subcellular location is the cell membrane. This chain is UPF0391 membrane protein RHECIAT_CH0003936, found in Rhizobium etli (strain CIAT 652).